A 748-amino-acid polypeptide reads, in one-letter code: Protein REPRESSOR OF SILENCING 3 (748 aa).

In terms of domain architecture, RRM spans 10–86; sequence VRLHVGGLGE…GRLRLEKAKE (77 aa). 4 disordered regions span residues 244–318, 350–531, 579–600, and 729–748; these read KSIL…QSID, GSSK…VSDT, VDEE…GGSS, and EWAK…NSEE. The span at 266–288 shows a compositional bias: polar residues; sequence THPSKNRQTISLEETGRQESSQA. Positions 294–314 are enriched in basic and acidic residues; that stretch reads KPSEVVPDKSSDEPSRTKDLE. Positions 373–382 are enriched in basic residues; the sequence is LKKKTKRKRV. 3 stretches are compositionally biased toward acidic residues: residues 403–416, 439–472, and 491–518; these read DTMA…DSDA, DDSD…DAVE, and ESDD…DVGS. The segment covering 520–531 has biased composition (polar residues); the sequence is DSGSLADTVSDT.

Ubiquitously expressed.

Its subcellular location is the nucleus. It localises to the nucleolus. The protein resides in the nucleoplasm. In terms of biological role, RNA-binding protein required for DNA demethylation and to eluviate siRNA-mediated transcriptional gene silencing (TGS), probably by guiding ROS1. Can bind specifically single stranded G-rich RNAs of 21-, 24- or 26-nt corresponding to promoter sequence of target genes; this interaction directs demethylation of target sequences. The protein is Protein REPRESSOR OF SILENCING 3 of Arabidopsis thaliana (Mouse-ear cress).